A 438-amino-acid chain; its full sequence is 3-phosphoshikimate 1-carboxyvinyltransferase (438 aa).

3-phosphoshikimate-binding residues include K21, S22, and R26. K21 lines the phosphoenolpyruvate pocket. Residues G93 and R121 each contribute to the phosphoenolpyruvate site. Residues S166, S167, Q168, S194, D324, and K351 each contribute to the 3-phosphoshikimate site. Q168 lines the phosphoenolpyruvate pocket. D324 (proton acceptor) is an active-site residue. R355 and R395 together coordinate phosphoenolpyruvate.

The protein belongs to the EPSP synthase family. Monomer.

Its subcellular location is the cytoplasm. It carries out the reaction 3-phosphoshikimate + phosphoenolpyruvate = 5-O-(1-carboxyvinyl)-3-phosphoshikimate + phosphate. It functions in the pathway metabolic intermediate biosynthesis; chorismate biosynthesis. Catalyzes the transfer of the enolpyruvyl moiety of phosphoenolpyruvate (PEP) to the 5-hydroxyl of shikimate-3-phosphate (S3P) to produce enolpyruvyl shikimate-3-phosphate and inorganic phosphate. The polypeptide is 3-phosphoshikimate 1-carboxyvinyltransferase (Methanobrevibacter smithii (strain ATCC 35061 / DSM 861 / OCM 144 / PS)).